The sequence spans 566 residues: 5'-AMP-activated protein kinase subunit gamma-2 (566 aa).

The disordered stretch occupies residues methionine 1–proline 198. The span at serine 15 to asparagine 25 shows a compositional bias: low complexity. Positions asparagine 54–aspartate 64 are enriched in basic and acidic residues. Residues serine 65, serine 71, serine 73, serine 90, serine 138, serine 143, serine 158, serine 161, and serine 162 each carry the phosphoserine modification. Composition is skewed to low complexity over residues lysine 132–proline 144 and threonine 156–glutamine 172. Threonine 165 is modified (phosphothreonine). Over residues tyrosine 180–serine 189 the composition is skewed to basic and acidic residues. The residue at position 196 (serine 196) is a Phosphoserine. CBS domains lie at proline 272–methionine 332, threonine 354–methionine 412, and isoleucine 427–isoleucine 489. ADP is bound by residues arginine 299, methionine 314–aspartate 319, valine 359, histidine 380–arginine 381, and lysine 399. Residues arginine 299, methionine 314–aspartate 319, valine 359, histidine 380, histidine 380–arginine 381, lysine 399, threonine 429, alanine 434, serine 455–alanine 456, serine 471–aspartate 474, arginine 498, histidine 527, histidine 527–arginine 528, and serine 543–aspartate 546 contribute to the AMP site. ATP-binding positions include arginine 299, methionine 314–aspartate 319, valine 359, histidine 380–arginine 381, arginine 381, and lysine 399. Residues leucine 367–isoleucine 388 carry the AMPK pseudosubstrate motif. Residues serine 471 to aspartate 474, arginine 498, and histidine 527 to arginine 528 each bind ADP. ATP is bound by residues serine 471–aspartate 474, arginine 498, and histidine 527–arginine 528. The 59-residue stretch at tyrosine 501–lysine 559 folds into the CBS 4 domain.

This sequence belongs to the 5'-AMP-activated protein kinase gamma subunit family. In terms of assembly, AMPK is a heterotrimer of an alpha catalytic subunit (PRKAA1 or PRKAA2), a beta (PRKAB1 or PRKAB2) and a gamma non-catalytic subunits (PRKAG1, PRKAG2 or PRKAG3). Interacts with FNIP1 and FNIP2. Phosphorylated by ULK1; leading to negatively regulate AMPK activity and suggesting the existence of a regulatory feedback loop between ULK1 and AMPK. Post-translationally, glycosylated; O-GlcNAcylated by OGT, promoting the AMP-activated protein kinase (AMPK) activity.

AMP/ATP-binding subunit of AMP-activated protein kinase (AMPK), an energy sensor protein kinase that plays a key role in regulating cellular energy metabolism. In response to reduction of intracellular ATP levels, AMPK activates energy-producing pathways and inhibits energy-consuming processes: inhibits protein, carbohydrate and lipid biosynthesis, as well as cell growth and proliferation. AMPK acts via direct phosphorylation of metabolic enzymes, and by longer-term effects via phosphorylation of transcription regulators. Also acts as a regulator of cellular polarity by remodeling the actin cytoskeleton; probably by indirectly activating myosin. Gamma non-catalytic subunit mediates binding to AMP, ADP and ATP, leading to activate or inhibit AMPK: AMP-binding results in allosteric activation of alpha catalytic subunit (PRKAA1 or PRKAA2) both by inducing phosphorylation and preventing dephosphorylation of catalytic subunits. ADP also stimulates phosphorylation, without stimulating already phosphorylated catalytic subunit. ATP promotes dephosphorylation of catalytic subunit, rendering the AMPK enzyme inactive. The chain is 5'-AMP-activated protein kinase subunit gamma-2 (Prkag2) from Mus musculus (Mouse).